A 154-amino-acid chain; its full sequence is MIIKNLQEFYRLLIPNTQLIAIDYGSKKLGIAMSNGERSIAMPLNTITVVNKTAVINSVLSIIAKYKICGVVIGLPIDMSGVVTQQTNIVMKFAEELAKYTNLPIYLQDERLTTKAANNFLKSFGVKRKDRNNNDDAVAASMILETVLDSIKRY.

This sequence belongs to the YqgF nuclease family.

It is found in the cytoplasm. Functionally, could be a nuclease involved in processing of the 5'-end of pre-16S rRNA. This chain is Putative pre-16S rRNA nuclease, found in Rickettsia canadensis (strain McKiel).